The sequence spans 172 residues: Ribosomally synthesized cyclic peptide phomopsin precursor phomA (172 aa).

Positions 1 to 18 (MRFTPAIVIAAFCSLAVA) are cleaved as a signal peptide. Propeptides lie at residues 19-35 (APAAKAIARSPSEAVED), 42-50 (KKRGEAVED), 57-65 (KKRGEAVED), 72-79 (KRGEAVED), 86-93 (KRGEAVED), 100-108 (KKRGEAVED), 115-122 (KRGEAVED), 129-137 (RKRGEAVED), 144-151 (KRGEAVED), 158-165 (KRGEAVED), and K172.

Post-translationally, phomA is processed by several endopeptidases including kexin proteases as well as the cluster-specific S41 family peptidase phomP1 and the oligopeptidase phomG to produce 10 identical copies of the hexapeptide Tyr-Val-Ile-Pro-Ile-Asp, that is further modified to yield phomapsins. The timing and order of proteolysis of the phomA precursor and PTMs are still unknown. Two tyrosinase-like enzymes, phomQ1 and phomQ2, catalyze the chlorination and hydroxylation of Tyr, respectively. PhomYb, is proposed to be involved in the construction of the macrocyclic structure. The other 4 ustYa family proteins may be involved in PTMs that generate the unique structure of phomopsin A. PhomYa is required for the hydroxylation of C-beta of Tyr. PhomYc, phomYd, and phomYe are responsible for the biosynthesis of 2,3-dehydroisoleucine (dIle), 2,3-dehydroaspartic acid (dAsp), and 3,4-dehydroproline (dPro), respectively. While dIle formation by phomYc is indispensable for the installation of dAsp by phomYd, the order of the other PTMs have not been elucidated yet. Most of the biosynthetic enzymes likely have broad substrate specificity, and thus, there might be a metabolic grid from a precursor to phomopsin A. The enzyme(s) responsible for the biosynthesis of 3,4-dehydrovaline (dVal) have also not been identified yet. Finally, phomM acts as an S-adenosylmethionine-dependent alpha-N-methyltransferase that catalyzes two successive N-methylation reactions, converting N-desmethyl-phomopsin A to phomopsin A and phomopsin A further to an N,N-dimethylated congener called phomopsin E.

It participates in mycotoxin biosynthesis. Ribosomally synthesized cyclic peptide phomopsin precursor; part of the gene cluster that mediates the biosynthesis of the phomopsins, a group of hexapeptide mycotoxins which infects lupins and causes lupinosis disease in livestock. The phomA translated product contains a 10-fold repeated peptide embedding the hexapeptide Tyr-Val-Ile-Pro-Ile-Asp, that is converted into phomapsins. After being excised from the precursor peptide by kexin proteases, the core peptides are cyclized and modified post-translationally by enzymes encoded within the corresponding gene cluster. The protein is Ribosomally synthesized cyclic peptide phomopsin precursor phomA of Diaporthe leptostromiformis (Lupinosis disease fungus).